A 321-amino-acid polypeptide reads, in one-letter code: Lambda-crystallin homolog (321 aa).

Serine 6 is modified (phosphoserine). Residues 19 to 20 (LI), aspartate 39, glutamate 100, and lysine 105 each bind NAD(+).

It belongs to the 3-hydroxyacyl-CoA dehydrogenase family. In terms of assembly, homodimer.

The protein localises to the cytoplasm. The catalysed reaction is L-gulonate + NAD(+) = 3-dehydro-L-gulonate + NADH + H(+). Inhibited by malonate. Functionally, has high L-gulonate 3-dehydrogenase activity. It also exhibits low dehydrogenase activity toward L-3-hydroxybutyrate (HBA) and L-threonate. This is Lambda-crystallin homolog (CRYL1) from Bos taurus (Bovine).